A 257-amino-acid chain; its full sequence is NH(3)-dependent NAD(+) synthetase (257 aa).

Residue 28 to 35 (GISGGVDS) coordinates ATP. Asp-34 is a binding site for Mg(2+). Deamido-NAD(+) is bound at residue Arg-109. Position 129 (Thr-129) interacts with ATP. Position 134 (Glu-134) interacts with Mg(2+). Lys-142 and Asp-149 together coordinate deamido-NAD(+). 2 residues coordinate ATP: Lys-158 and Ser-180. Residue 240 to 241 (HK) participates in deamido-NAD(+) binding.

This sequence belongs to the NAD synthetase family. Homodimer.

It carries out the reaction deamido-NAD(+) + NH4(+) + ATP = AMP + diphosphate + NAD(+) + H(+). Its pathway is cofactor biosynthesis; NAD(+) biosynthesis; NAD(+) from deamido-NAD(+) (ammonia route): step 1/1. In terms of biological role, catalyzes the ATP-dependent amidation of deamido-NAD to form NAD. Uses ammonia as a nitrogen source. The polypeptide is NH(3)-dependent NAD(+) synthetase (Pyrococcus horikoshii (strain ATCC 700860 / DSM 12428 / JCM 9974 / NBRC 100139 / OT-3)).